Consider the following 342-residue polypeptide: S-adenosylmethionine:tRNA ribosyltransferase-isomerase (342 aa).

Belongs to the QueA family. As to quaternary structure, monomer.

It localises to the cytoplasm. It carries out the reaction 7-aminomethyl-7-carbaguanosine(34) in tRNA + S-adenosyl-L-methionine = epoxyqueuosine(34) in tRNA + adenine + L-methionine + 2 H(+). It participates in tRNA modification; tRNA-queuosine biosynthesis. In terms of biological role, transfers and isomerizes the ribose moiety from AdoMet to the 7-aminomethyl group of 7-deazaguanine (preQ1-tRNA) to give epoxyqueuosine (oQ-tRNA). The sequence is that of S-adenosylmethionine:tRNA ribosyltransferase-isomerase from Streptococcus pyogenes serotype M3 (strain ATCC BAA-595 / MGAS315).